A 117-amino-acid chain; its full sequence is MDKKAARIRRATRARRKLQELGATRLVVHRTPRHIYAQVIAPNGSEVLVAASTVEKAIAEQLKGTGNKDAAAAVGKTIAVRALEKGIKDVSFDRSGFQYHGRVQALADAAREAGLQF.

It belongs to the universal ribosomal protein uL18 family. Part of the 50S ribosomal subunit; part of the 5S rRNA/L5/L18/L25 subcomplex. Contacts the 5S and 23S rRNAs.

In terms of biological role, this is one of the proteins that bind and probably mediate the attachment of the 5S RNA into the large ribosomal subunit, where it forms part of the central protuberance. The polypeptide is Large ribosomal subunit protein uL18 (Sodalis glossinidius (strain morsitans)).